We begin with the raw amino-acid sequence, 624 residues long: Adenine deaminase 1 (624 aa).

It belongs to the metallo-dependent hydrolases superfamily. Adenine deaminase family. It depends on Mn(2+) as a cofactor.

The catalysed reaction is adenine + H2O + H(+) = hypoxanthine + NH4(+). This chain is Adenine deaminase 1, found in Bradyrhizobium sp. (strain ORS 278).